The following is a 370-amino-acid chain: Pulmonary surfactant-associated protein B (370 aa).

The N-terminal stretch at 1-24 (MAKSHLPPWLLLLLLPTLCGPGTA) is a signal peptide. The propeptide occupies 25 to 184 (VWATSPLACA…PHTQDLSAQR (160 aa)). Positions 26-66 (WATSPLACAQGPEFWCQSLEQALQCKALGHCLQEVWGHVGA) constitute a Saposin A-type domain. Saposin B-type domains lie at 66–148 (ADDL…QPGS), 188–265 (PLPL…SSVD), and 284–359 (QDPE…VATL). 9 disulfides stabilise this stretch: C70/C144, C73/C138, C101/C113, C192/C261, C195/C255, C219/C230, C288/C355, C291/C349, and C314/C324. A propeptide spanning residues 264 to 370 (VDSIGQVPPT…PLQCIQSPHF (107 aa)) is cleaved from the precursor. N300 is a glycosylation site (N-linked (GlcNAc...) asparagine).

In terms of assembly, homodimer; disulfide-linked.

The protein localises to the secreted. It localises to the extracellular space. The protein resides in the surface film. Its function is as follows. Pulmonary surfactant-associated proteins promote alveolar stability by lowering the surface tension at the air-liquid interface in the peripheral air spaces. SP-B increases the collapse pressure of palmitic acid to nearly 70 millinewtons per meter. This is Pulmonary surfactant-associated protein B (SFTPB) from Oryctolagus cuniculus (Rabbit).